The following is a 570-amino-acid chain: Sulfite reductase [NADPH] hemoprotein beta-component (570 aa).

Positions 434, 440, 479, and 483 each coordinate [4Fe-4S] cluster. Residue Cys483 coordinates siroheme.

Belongs to the nitrite and sulfite reductase 4Fe-4S domain family. In terms of assembly, alpha(8)-beta(8). The alpha component is a flavoprotein, the beta component is a hemoprotein. Requires siroheme as cofactor. The cofactor is [4Fe-4S] cluster.

It catalyses the reaction hydrogen sulfide + 3 NADP(+) + 3 H2O = sulfite + 3 NADPH + 4 H(+). It participates in sulfur metabolism; hydrogen sulfide biosynthesis; hydrogen sulfide from sulfite (NADPH route): step 1/1. Component of the sulfite reductase complex that catalyzes the 6-electron reduction of sulfite to sulfide. This is one of several activities required for the biosynthesis of L-cysteine from sulfate. The chain is Sulfite reductase [NADPH] hemoprotein beta-component from Escherichia fergusonii (strain ATCC 35469 / DSM 13698 / CCUG 18766 / IAM 14443 / JCM 21226 / LMG 7866 / NBRC 102419 / NCTC 12128 / CDC 0568-73).